Consider the following 70-residue polypeptide: Enhancer of split m6 protein (70 aa).

The chain is Enhancer of split m6 protein from Drosophila melanogaster (Fruit fly).